The chain runs to 154 residues: Ribonuclease H (154 aa).

An RNase H type-1 domain is found at 1–142; sequence MTPKLVIYTD…ADELARLGML (142 aa). Mg(2+) contacts are provided by aspartate 10, glutamate 48, aspartate 70, and aspartate 134.

The protein belongs to the RNase H family. Monomer. It depends on Mg(2+) as a cofactor.

The protein localises to the cytoplasm. The enzyme catalyses Endonucleolytic cleavage to 5'-phosphomonoester.. Functionally, endonuclease that specifically degrades the RNA of RNA-DNA hybrids. In Caulobacter sp. (strain K31), this protein is Ribonuclease H.